The following is a 240-amino-acid chain: Putative RING finger protein ORF96 (240 aa).

The RING-type 1 zinc-finger motif lies at 9–44; sequence CVVCMEEKPLVVFEPCMHHNCCESCSGHVSNCPYCR. The RING-type 2; degenerate zinc-finger motif lies at 150 to 202; it reads CVICKKEIKEEVGKTYMHACCTATICKPCAKAILKAMVEKEITENLPFCPYCF.

The sequence is that of Putative RING finger protein ORF96 from Ostreid herpesvirus 1 (isolate France) (OsHV-1).